An 86-amino-acid polypeptide reads, in one-letter code: Bradykinin-potentiating peptide 25.12 (86 aa).

An N-terminal signal peptide occupies residues 1–22 (MNKRVLLVIFFVTLLIADEVNS). Residues 67–86 (APAAAAAPEEPPVEQRRRRR) form a disordered region.

Belongs to the non-disulfide-bridged peptide (NDBP) superfamily. Long chain multifunctional peptide (group 2) family. In terms of tissue distribution, expressed by the venom gland.

Its subcellular location is the secreted. Functionally, inhibits angiotensin-converting enzyme (ACE), but does not serve as substrate for the enzyme. Potentiates bradykinin (BK) on the isolated guinea pig ileum as well as the isolated rat uterus for contraction. Also potentiates in vivo the depressor effect of BK on arterial blood pressure in the normotensive anesthetized rat. The sequence is that of Bradykinin-potentiating peptide 25.12 from Lychas mucronatus (Chinese swimming scorpion).